The following is a 765-amino-acid chain: Kinesin-like protein KIN-14S (765 aa).

The region spanning 132 to 456 is the Kinesin motor domain; that stretch reads NIRVFCRCRP…LNFASRVRGI (325 aa). Position 215 to 222 (215 to 222) interacts with ATP; the sequence is GQTGTGKT. Positions 469-534 form a coiled coil; it reads ELLKSKQMAE…ERKTRIKQES (66 aa). Disordered regions lie at residues 581 to 613 and 654 to 678; these read MPQQ…SSMD and LRPE…RGDP. Residues 602–611 show a composition bias toward low complexity; sequence NNNSNRRSSS.

The protein belongs to the TRAFAC class myosin-kinesin ATPase superfamily. Kinesin family. KIN-14 subfamily.

This is Kinesin-like protein KIN-14S from Arabidopsis thaliana (Mouse-ear cress).